The chain runs to 201 residues: Large ribosomal subunit protein uL4 (201 aa).

A disordered region spans residues 44–71 (RAQKTRAEVSGSGKKPWRQKGTGRARSG).

This sequence belongs to the universal ribosomal protein uL4 family. In terms of assembly, part of the 50S ribosomal subunit.

One of the primary rRNA binding proteins, this protein initially binds near the 5'-end of the 23S rRNA. It is important during the early stages of 50S assembly. It makes multiple contacts with different domains of the 23S rRNA in the assembled 50S subunit and ribosome. In terms of biological role, forms part of the polypeptide exit tunnel. In Actinobacillus succinogenes (strain ATCC 55618 / DSM 22257 / CCUG 43843 / 130Z), this protein is Large ribosomal subunit protein uL4.